We begin with the raw amino-acid sequence, 319 residues long: Cell division protein FtsN (319 aa).

Residues 1–30 (MAQRDYVRRSQPAPSRRKKSTSRKKQRNLP) form a disordered region. Residues 1–33 (MAQRDYVRRSQPAPSRRKKSTSRKKQRNLPAVS) lie on the Cytoplasmic side of the membrane. The tract at residues 4–6 (RDY) is mediates interaction with FtsA. The segment covering 15-27 (SRRKKSTSRKKQR) has biased composition (basic residues). The helical transmembrane segment at 34–54 (PAMVAIAAAVLVTFIGGLYFI) threads the bilayer. Residues 55-319 (THHKKEESET…TNCIRLAAGG (265 aa)) lie on the Periplasmic side of the membrane. Disordered regions lie at residues 60-79 (EESETLQSQKVTGNGLPPKP) and 89-113 (LESRQPGVRAPTEPSAGGEVKTPEQ). Tandem repeats lie at residues 115–120 (TPEQRQ), 145–150 (TPEQRQ), 197–200 (QSKP), and 220–223 (QSKP). The 2 X 6 AA repeats stretch occupies residues 115–150 (TPEQRQLLEQMQADMRQQPTQLVEVPWNEQTPEQRQ). A disordered region spans residues 140–245 (PWNEQTPEQR…PKPTAEKKDE (106 aa)). Low complexity predominate over residues 143–171 (EQTPEQRQQTLQRQRQAQQLAEQQRLAQQ). A compositionally biased stretch (polar residues) spans 172-221 (SRTTEQSWQQQTRTSQAAPVQAQPRQSKPASSQQPYQDLLQTPAHTTAQS). The segment at 197-223 (QSKPASSQQPYQDLLQTPAHTTAQSKP) is 2 X 4 AA repeats. A compositionally biased stretch (low complexity) spans 222–238 (KPQQAAPVARAADAPKP). The SPOR domain maps to 242–316 (KKDERRWMVQ…AGHTNCIRLA (75 aa)). A disulfide bond links Cys252 and Cys312.

Belongs to the FtsN family. Interacts with FtsA via its N-terminal cytoplasmic domain. Interacts with ZapA, FtsQ, FtsW and FtsI.

Its subcellular location is the cell inner membrane. In terms of biological role, essential cell division protein that activates septal peptidoglycan synthesis and constriction of the cell. Acts on both sides of the membrane, via interaction with FtsA in the cytoplasm and interaction with the FtsQBL complex in the periplasm. These interactions may induce a conformational switch in both FtsA and FtsQBL, leading to septal peptidoglycan synthesis by FtsI and associated synthases. Required for full FtsI activity. Required for recruitment of AmiC to the septal ring. This Escherichia coli (strain K12) protein is Cell division protein FtsN.